The chain runs to 335 residues: N-acetyl-gamma-glutamyl-phosphate reductase (335 aa).

The active site involves Cys-147.

Belongs to the NAGSA dehydrogenase family. Type 1 subfamily.

Its subcellular location is the cytoplasm. It catalyses the reaction N-acetyl-L-glutamate 5-semialdehyde + phosphate + NADP(+) = N-acetyl-L-glutamyl 5-phosphate + NADPH + H(+). The protein operates within amino-acid biosynthesis; L-arginine biosynthesis; N(2)-acetyl-L-ornithine from L-glutamate: step 3/4. Catalyzes the NADPH-dependent reduction of N-acetyl-5-glutamyl phosphate to yield N-acetyl-L-glutamate 5-semialdehyde. This chain is N-acetyl-gamma-glutamyl-phosphate reductase, found in Campylobacter hominis (strain ATCC BAA-381 / DSM 21671 / CCUG 45161 / LMG 19568 / NCTC 13146 / CH001A).